Reading from the N-terminus, the 359-residue chain is Phospho-N-acetylmuramoyl-pentapeptide-transferase (359 aa).

10 helical membrane passes run 3–23 (QILV…PALI), 55–75 (VAIV…GLAF), 80–100 (VSAS…VGFL), 117–137 (TAKT…VLQF), 156–176 (IATV…IVSA), 187–207 (LDGL…LITF), 231–251 (LTLI…WNAA), 255–275 (IFMG…LSVT), 280–300 (ILAV…VLQI), and 334–354 (FWLL…GEWL).

It belongs to the glycosyltransferase 4 family. MraY subfamily. The cofactor is Mg(2+).

The protein resides in the cell membrane. The catalysed reaction is UDP-N-acetyl-alpha-D-muramoyl-L-alanyl-gamma-D-glutamyl-meso-2,6-diaminopimeloyl-D-alanyl-D-alanine + di-trans,octa-cis-undecaprenyl phosphate = di-trans,octa-cis-undecaprenyl diphospho-N-acetyl-alpha-D-muramoyl-L-alanyl-D-glutamyl-meso-2,6-diaminopimeloyl-D-alanyl-D-alanine + UMP. The protein operates within cell wall biogenesis; peptidoglycan biosynthesis. Its function is as follows. Catalyzes the initial step of the lipid cycle reactions in the biosynthesis of the cell wall peptidoglycan: transfers peptidoglycan precursor phospho-MurNAc-pentapeptide from UDP-MurNAc-pentapeptide onto the lipid carrier undecaprenyl phosphate, yielding undecaprenyl-pyrophosphoryl-MurNAc-pentapeptide, known as lipid I. The protein is Phospho-N-acetylmuramoyl-pentapeptide-transferase of Mycobacterium leprae (strain TN).